Reading from the N-terminus, the 24-residue chain is Xenoposin precursor fragment B2 (24 aa).

As to expression, expressed by the skin glands.

The protein resides in the secreted. Its function is as follows. Has antimicrobial activity against Gram-negative bacterium E.coli ATCC 25922 (MIC=100 uM), Gram-positive bacterium S.auerus ATCC 25923 (MIC=25 uM). The chain is Xenoposin precursor fragment B2 from Xenopus borealis (Kenyan clawed frog).